Reading from the N-terminus, the 493-residue chain is Solute carrier family 2, facilitated glucose transporter member 3 (493 aa).

Over 1–10 (MGTTKVTPSL) the chain is Cytoplasmic. The chain crosses the membrane as a helical span at residues 11 to 32 (VFAVTVATIGSFQFGYNTGVIN). Topologically, residues 33-64 (APETILKDFLNYTLEERLEDLPSEGLLTALWS) are extracellular. Residue Asn43 is glycosylated (N-linked (GlcNAc...) asparagine). Residues 65–85 (LCVAIFSVGGMIGSFSVGLFV) form a helical membrane-spanning segment. Residues 86 to 90 (NRFGR) lie on the Cytoplasmic side of the membrane. A helical transmembrane segment spans residues 91-111 (RNSMLLVNLLAIIAGCLMGFA). Over 112-118 (KIAESVE) the chain is Extracellular. A helical membrane pass occupies residues 119 to 142 (MLILGRLLIGIFCGLCTGFVPMYI). The Cytoplasmic portion of the chain corresponds to 143-153 (GEVSPTALRGA). Residues 154–174 (FGTLNQLGIVVGILVAQIFGL) traverse the membrane as a helical segment. Gln159 contributes to the D-glucose binding site. The Extracellular portion of the chain corresponds to 175–183 (DFILGSEEL). The chain crosses the membrane as a helical span at residues 184 to 204 (WPGLLGLTIIPAILQSAALPF). Topologically, residues 205–269 (CPESPRFLLI…LFRSPNYVQP (65 aa)) are cytoplasmic. Thr232 carries the post-translational modification Phosphothreonine. Residues 270–290 (LLISIVLQLSQQLSGINAVFY) form a helical membrane-spanning segment. Residues 277–279 (QLS) form an important for selectivity against fructose region. D-glucose is bound by residues 280-281 (QQ) and Asn286. The Extracellular portion of the chain corresponds to 291-304 (YSTGIFKDAGVQEP). Residues 305–325 (IYATIGAGVVNTIFTVVSLFL) form a helical membrane-spanning segment. Asn315 provides a ligand contact to D-glucose. Topologically, residues 326-331 (VERAGR) are cytoplasmic. Residues 332-352 (RTLHMIGLGGMAVCSVFMTIS) traverse the membrane as a helical segment. Residues 353-363 (LLLKDDYEAMS) lie on the Extracellular side of the membrane. A helical membrane pass occupies residues 364 to 389 (FVCIVAILIYVAFFEIGPGPIPWFIV). Residues Glu378 and Trp386 each contribute to the D-glucose site. The Cytoplasmic segment spans residues 390 to 399 (AELFSQGPRP). A helical transmembrane segment spans residues 400–420 (AAIAVAGCCNWTSNFLVGMLF). Over 421–429 (PSAAAYLGA) the chain is Extracellular. A helical membrane pass occupies residues 430-450 (YVFIIFAAFLIFFLIFTFFKV). The Cytoplasmic portion of the chain corresponds to 451–493 (PETKGRTFEDIARAFEGQAHSGKGPAGVELNSMQPVKETPGNA). The disordered stretch occupies residues 469 to 493 (AHSGKGPAGVELNSMQPVKETPGNA). Residues Ser471 and Ser482 each carry the phosphoserine modification. Thr489 bears the Phosphothreonine mark.

Belongs to the major facilitator superfamily. Sugar transporter (TC 2.A.1.1) family. Glucose transporter subfamily. As to quaternary structure, interacts with SMIM43; the interaction may promote SLC2A3-mediated glucose transport to meet the energy needs of mesendoderm differentiation. As to expression, expressed in spermatozoa (at protein level). Detected in brain (at protein level). Abundantly expressed in the hippocampus, cerebellum and cerebral cortex with lower expression in the dentate gyrus and piriform cortex.

It is found in the cell membrane. The protein localises to the perikaryon. It localises to the cell projection. It carries out the reaction D-glucose(out) = D-glucose(in). The catalysed reaction is D-galactose(in) = D-galactose(out). Its activity is regulated as follows. Deoxyglucose transport is inhibited by D-glucose, D-galactose and maltose. Galactose transport is inhibited by D-glucose and maltose. Functionally, facilitative glucose transporter. Can also mediate the uptake of various other monosaccharides across the cell membrane. Mediates the uptake of glucose, 2-deoxyglucose, galactose, mannose, xylose and fucose, and probably also dehydroascorbate. Does not mediate fructose transport. Required for mesendoderm differentiation. The chain is Solute carrier family 2, facilitated glucose transporter member 3 from Mus musculus (Mouse).